Here is an 82-residue protein sequence, read N- to C-terminus: MASSSGAGAAAAAAAANLNAVRETMDVLLEISRILNTGLDMETLSICVRLCEQGINPEALSSVIKELRKATEALKAAENMTS.

Ala2 is subject to N-acetylalanine.

This sequence belongs to the MOZART1 family. In terms of assembly, associates with the gamma-tubulin ring complex (gTuRC) consisting of TUBGCP2, TUBGCP3, TUBGCP4, TUBGCP5 and TUBGCP6 and gamma-tubulin TUBG1 or TUBG2; within the complex, interacts with TUBGCP3 and TUBGCP6 to form a luminal bridge with actin that stabilizes the initial structure during complex assembly. Interacts with TUBG1.

The protein resides in the cytoplasm. It is found in the cytoskeleton. It localises to the microtubule organizing center. The protein localises to the centrosome. Its subcellular location is the spindle. In terms of biological role, required for the recruitment and the assembly of the gamma-tubulin ring complex (gTuRC) at the centrosome. The gTuRC regulates the minus-end nucleation of alpha-beta tubulin heterodimers that grow into microtubule protafilaments, a critical step in centrosome duplication and spindle formation. The polypeptide is Mitotic-spindle organizing protein 1 (MZT1) (Homo sapiens (Human)).